The following is a 544-amino-acid chain: MAKDIKFSEDARHAMLRGVDALADAVKVTIGPKGRNVVLEKKFGSPLITNDGVTIAKEIELEDRFENMGAKLVAEVASKTNEVAGDGTTTATVLAQAMIREGLKNVTAGANPMILRKGIDKAVTRALEELKAISKPIESKEAIAQVAAISAADEEVGELIAEAMERVGNDGVITIEESRGFTTELDVVEGMQFDRGYLSPYMISDSDKMEASLDNPYILITDKKISNIQEIIPVLEQVVQQGKPILIVAEDIEGDALATLVLNKLRGTFNAVAVKAPGFGDRRKAMLEDLATLTGGQVITEDLGLDLKSASLDMLGRASKVVVTKDTTTVVEGAGNEETIKARVQTIRNQIEETTSDFDREKLQERLAKLAGGVAVVKVGAATETELKERKLRIEDALNATRAAVEEGIVAGGGTSLINVIPAVRALLSEVTADEATGVKLVLRALEAPVRQIAENAGEEGSVIVEKLKNESVGVGYNAATGEYVDMIAHGIVDPAKVTRSALQNAASVSAMFLTTEAVIADKPEKDAPAMPDMGGMGGMGGMM.

ATP is bound by residues 29 to 32 (TIGP), 86 to 90 (DGTTT), glycine 413, 478 to 480 (NAA), and aspartate 494.

The protein belongs to the chaperonin (HSP60) family. As to quaternary structure, forms a cylinder of 14 subunits composed of two heptameric rings stacked back-to-back. Interacts with the co-chaperonin GroES.

It localises to the cytoplasm. It catalyses the reaction ATP + H2O + a folded polypeptide = ADP + phosphate + an unfolded polypeptide.. In terms of biological role, together with its co-chaperonin GroES, plays an essential role in assisting protein folding. The GroEL-GroES system forms a nano-cage that allows encapsulation of the non-native substrate proteins and provides a physical environment optimized to promote and accelerate protein folding. This is Chaperonin GroEL from Exiguobacterium sp. (strain ATCC BAA-1283 / AT1b).